A 366-amino-acid polypeptide reads, in one-letter code: Putative ankyrin repeat protein RBE_0601 (366 aa).

ANK repeat units follow at residues 39 to 68 (KHGT…DINE), 94 to 124 (LPDE…DVNT), 131 to 160 (HGGA…IASQ), 162 to 186 (VISA…TAHD), 210 to 239 (KSSN…NPNA), and 250 to 280 (IALS…DTSK).

The chain is Putative ankyrin repeat protein RBE_0601 from Rickettsia bellii (strain RML369-C).